A 336-amino-acid polypeptide reads, in one-letter code: HTH-type transcriptional repressor PurR (336 aa).

The 55-residue stretch at 2-56 folds into the HTH lacI-type domain; the sequence is ATIKDVAKMAGVSTTTVSHVINKTRFVAKDTEEAVLSAIKQLNYSPSAVARSLKV. Residues 4 to 23 constitute a DNA-binding region (H-T-H motif); it reads IKDVAKMAGVSTTTVSHVIN. A DNA-binding region spans residues 48–56; it reads SAVARSLKV. Residues tyrosine 73, lysine 188, threonine 190, phenylalanine 219, and aspartate 273 each contribute to the hypoxanthine site.

Homodimer.

It participates in purine metabolism; purine nucleotide biosynthesis [regulation]. Its function is as follows. Is the main repressor of the genes involved in the de novo synthesis of purine nucleotides, regulating purB, purC, purEK, purF, purHD, purL, purMN and guaBA expression. PurR is allosterically activated to bind its cognate DNA by binding the purine corepressors, hypoxanthine or guanine, thereby effecting transcription repression. This is HTH-type transcriptional repressor PurR from Haemophilus influenzae (strain ATCC 51907 / DSM 11121 / KW20 / Rd).